A 647-amino-acid chain; its full sequence is MSDLYTIDPMLAKDAHVDRAHYKTLYHESLEQPEAFWSNIAQRLEWFKTPTKIKDVSYQLEDVHIRWFEDGELNASVNCLDRHLTLRGDKTALLFEPDAPDAPSSRITYRELYERVCQLGNALRHLNIEKGDRVTIYLPMIPDAVVAILACARIGAIHSVVFGGFAPNSIADRINDCGSKLIITADEGLRGGRKIPLKANVDAALKIHGTQSVETVLVVRHTGGTINMHTPRDRWFHHVVDIQATECAPERMNAEDPLFILYTSGSTGKPKGVLHTTGGYLVYTSYTHETVFDLRENDIYWCTADIGWITGHSYIVYGPLANGATVLLFEGVPHYPTVSRFWEVIDKHHVTLFYTAPTAIRALMREGDTPVKKTSRKSLRLLGSVGEPINPEAWHWYYTIVGNGRCPIVDTWWQTETGGILITPLIGATDLKPGSVTLPFFGIRPALVDTNGQILDGPAAGNLVLLDSWPGQMRTVYGDHQRFIDTYFRTYPNTYFTGDGCRRDADGYYWITGRVDDVINISGHRIGTAEIESTLVAHPKVAEAAVVGFPHPIKGQGIYAYVTLITGETPSEALHQELLTWVRKEIGAIATPDHVQWAPNLPKTRSGKIMRRILRKIAENAPDQLGDTSTLADPSIVDLLLNERLTH.

Residues 190–193 and Thr310 each bind CoA; that span reads RGGR. Residues 386–388, 410–415, Asp499, and Arg514 each bind ATP; these read GEP and DTWWQT. Residue Ser522 coordinates CoA. Arg525 contributes to the ATP binding site. The Mg(2+) site is built by Val536, His538, and Val541. Arg583 serves as a coordination point for CoA. At Lys608 the chain carries N6-acetyllysine.

Belongs to the ATP-dependent AMP-binding enzyme family. It depends on Mg(2+) as a cofactor. Acetylated. Deacetylation by the SIR2-homolog deacetylase activates the enzyme.

It carries out the reaction acetate + ATP + CoA = acetyl-CoA + AMP + diphosphate. Functionally, catalyzes the conversion of acetate into acetyl-CoA (AcCoA), an essential intermediate at the junction of anabolic and catabolic pathways. AcsA undergoes a two-step reaction. In the first half reaction, AcsA combines acetate with ATP to form acetyl-adenylate (AcAMP) intermediate. In the second half reaction, it can then transfer the acetyl group from AcAMP to the sulfhydryl group of CoA, forming the product AcCoA. The polypeptide is Acetyl-coenzyme A synthetase (Xylella fastidiosa (strain 9a5c)).